A 421-amino-acid chain; its full sequence is Probable mitochondrial chaperone BCS1-A (421 aa).

At 1–10 (MNHLKDQSKS) the chain is on the mitochondrial intermembrane side. Residues 11-31 (IVLGISSGIGIFLISGGINIF) traverse the membrane as a helical segment. Residues 32 to 421 (KNVGQYILNR…VQSITPFNLN (390 aa)) lie on the Mitochondrial matrix side of the membrane. 228–235 (GEPGNGKS) lines the ATP pocket.

It belongs to the AAA ATPase family. BCS1 subfamily.

The protein localises to the mitochondrion inner membrane. The enzyme catalyses ATP + H2O = ADP + phosphate + H(+). In terms of biological role, chaperone necessary for the assembly of mitochondrial respiratory chain complex III. The polypeptide is Probable mitochondrial chaperone BCS1-A (bcs1la) (Dictyostelium discoideum (Social amoeba)).